Here is a 44-residue protein sequence, read N- to C-terminus: MRQTFQPSRIVRKRRHGFRTRMSTRMGRKILNRRRTQGRRVLCA.

This sequence belongs to the bacterial ribosomal protein bL34 family.

In Ehrlichia ruminantium (strain Gardel), this protein is Large ribosomal subunit protein bL34.